Consider the following 377-residue polypeptide: Chaperone protein DnaJ (377 aa).

A J domain is found at 5–70 (DYYQVLGVSR…KKRSAYDQLG (66 aa)). The CR-type zinc-finger motif lies at 138–216 (GVTKIISFKT…CYGEGRYINT (79 aa)). 8 residues coordinate Zn(2+): Cys151, Cys154, Cys168, Cys171, Cys190, Cys193, Cys204, and Cys207. 4 CXXCXGXG motif repeats span residues 151 to 158 (CEACTGKG), 168 to 175 (CPTCRGSG), 190 to 197 (CQTCRGAG), and 204 to 211 (CTKCYGEG).

The protein belongs to the DnaJ family. Homodimer. Zn(2+) is required as a cofactor.

Its subcellular location is the cytoplasm. In terms of biological role, participates actively in the response to hyperosmotic and heat shock by preventing the aggregation of stress-denatured proteins and by disaggregating proteins, also in an autonomous, DnaK-independent fashion. Unfolded proteins bind initially to DnaJ; upon interaction with the DnaJ-bound protein, DnaK hydrolyzes its bound ATP, resulting in the formation of a stable complex. GrpE releases ADP from DnaK; ATP binding to DnaK triggers the release of the substrate protein, thus completing the reaction cycle. Several rounds of ATP-dependent interactions between DnaJ, DnaK and GrpE are required for fully efficient folding. Also involved, together with DnaK and GrpE, in the DNA replication of plasmids through activation of initiation proteins. In Orientia tsutsugamushi (strain Ikeda) (Rickettsia tsutsugamushi), this protein is Chaperone protein DnaJ.